The primary structure comprises 143 residues: MSHDSDDKTFPYEKDDAELRRRLTPMQYEVTQHAATERAFTGEYTDTEDDGIYKCVVCSTPLFESGSKFHSGCGWPSYFKPLNGEVIDEKVDYSHGMVRVEVRCNHCGAHLGHVFEDGPRDQTGLRYCINSAALNFESRPENE.

Positions 16–139 (DAELRRRLTP…NSAALNFESR (124 aa)) constitute a MsrB domain. Positions 55, 58, 104, and 107 each coordinate Zn(2+). Residue cysteine 128 is the Nucleophile of the active site.

It belongs to the MsrB Met sulfoxide reductase family. Requires Zn(2+) as cofactor.

The enzyme catalyses L-methionyl-[protein] + [thioredoxin]-disulfide + H2O = L-methionyl-(R)-S-oxide-[protein] + [thioredoxin]-dithiol. This is Peptide methionine sulfoxide reductase MsrB from Burkholderia lata (strain ATCC 17760 / DSM 23089 / LMG 22485 / NCIMB 9086 / R18194 / 383).